Consider the following 258-residue polypeptide: Phosphate import ATP-binding protein PstB 1 (258 aa).

Positions 5–247 constitute an ABC transporter domain; the sequence is LDLTDVNIYY…EKIFSNPNQK (243 aa). Residue 37-44 coordinates ATP; that stretch reads GPSGCGKT.

The protein belongs to the ABC transporter superfamily. Phosphate importer (TC 3.A.1.7) family. The complex is composed of two ATP-binding proteins (PstB), two transmembrane proteins (PstC and PstA) and a solute-binding protein (PstS).

Its subcellular location is the cell membrane. It carries out the reaction phosphate(out) + ATP + H2O = ADP + 2 phosphate(in) + H(+). Its function is as follows. Part of the ABC transporter complex PstSACB involved in phosphate import. Responsible for energy coupling to the transport system. This chain is Phosphate import ATP-binding protein PstB 1, found in Mycobacterium bovis (strain ATCC BAA-935 / AF2122/97).